Reading from the N-terminus, the 674-residue chain is MGSNSSKISDLPKNEYLKRLSGPEAISENDPFWNQLFSFSFSAPTSSTELKLLEEATISVCKSLVENNPRTGNLAALTKVFLARTRELRLSAECQNHIFIWQTHNALFIICCLLKVFICEMSEEELQLHFTYEEKLPGTYTLCVLLGSDSEDLLEELLCSLIQLITDTPLLDITYEISVEAISAMIVFLSCQLFHKEVLRQSISHKYLMQGPCLPYTSKLVKTLLYNFIRQEKPPPPGTHVFPQQSDGGGLLYGLASGVATGLWTVFTLGGVGSKAASPELTSPLANQSLLLLLVLVNLTDAPDIPNPYRQAVTSFKNTQDSSPFPSSVPHTFQINFNSLYTTLCEQQTSDQATLLLYTLLHQNANVRTYMLARTDMENLVLPILEILYHVEERNSHHVYMALIILLILTEDDGFNRSIHEVILKNITWYSERVLTEISLGSLLILVVIRTIQYNMTRTRDKYLHTNCLAALANMSAQFRSLHQYAAQRIISLFSLLSKKHNKVLEQATQSLRGSLSSSDVPLPDYAQDLSVIEEVIRMMLEIINSCLTNSLHHNPNLVYALLYKRDLFEQFRTHPSFQDIMQNIDLVISFFSSRLLQSGAELSVERVLEIIKQGVVALPKDRLKKFPELKFKYVEEEQPEEFFIPYVWSLVYNSAVGLYWNPQDIQLFAMDSD.

A lipid anchor (N-myristoyl glycine) is attached at Gly-2.

This sequence belongs to the dymeclin family. As to quaternary structure, interacts with GOLM1 and PPIB. In terms of processing, myristoylated in vitro; myristoylation is not essential for protein targeting to Golgi compartment.

It localises to the cytoplasm. It is found in the golgi apparatus. The protein localises to the membrane. Necessary for correct organization of Golgi apparatus. Involved in bone development. The polypeptide is Dymeclin (Dym) (Rattus norvegicus (Rat)).